A 304-amino-acid chain; its full sequence is Dihydroorotate dehydrogenase B (NAD(+)), catalytic subunit (304 aa).

Residues Ser-22 and 46–47 (KA) contribute to the FMN site. Residues Lys-46 and 70–74 (NAIGL) each bind substrate. Asn-100 and Asn-128 together coordinate FMN. Asn-128 serves as a coordination point for substrate. Cys-131 functions as the Nucleophile in the catalytic mechanism. Positions 166 and 192 each coordinate FMN. 193–194 (NT) contributes to the substrate binding site. FMN contacts are provided by residues Gly-218, 244–245 (GG), and 266–267 (GT).

This sequence belongs to the dihydroorotate dehydrogenase family. Type 1 subfamily. As to quaternary structure, heterotetramer of 2 PyrK and 2 PyrD type B subunits. FMN serves as cofactor.

The protein resides in the cytoplasm. The catalysed reaction is (S)-dihydroorotate + NAD(+) = orotate + NADH + H(+). The protein operates within pyrimidine metabolism; UMP biosynthesis via de novo pathway; orotate from (S)-dihydroorotate (NAD(+) route): step 1/1. Catalyzes the conversion of dihydroorotate to orotate with NAD(+) as electron acceptor. The sequence is that of Dihydroorotate dehydrogenase B (NAD(+)), catalytic subunit (pyrD) from Fusobacterium nucleatum subsp. nucleatum (strain ATCC 25586 / DSM 15643 / BCRC 10681 / CIP 101130 / JCM 8532 / KCTC 2640 / LMG 13131 / VPI 4355).